The following is an 87-amino-acid chain: Small ribosomal subunit protein uS17 (87 aa).

Belongs to the universal ribosomal protein uS17 family. In terms of assembly, part of the 30S ribosomal subunit.

Its function is as follows. One of the primary rRNA binding proteins, it binds specifically to the 5'-end of 16S ribosomal RNA. The protein is Small ribosomal subunit protein uS17 of Anoxybacillus flavithermus (strain DSM 21510 / WK1).